The sequence spans 183 residues: ATP-dependent protease subunit HslV (183 aa).

T9 is a catalytic residue. The Na(+) site is built by A164, C167, and T170.

This sequence belongs to the peptidase T1B family. HslV subfamily. As to quaternary structure, a double ring-shaped homohexamer of HslV is capped on each side by a ring-shaped HslU homohexamer. The assembly of the HslU/HslV complex is dependent on binding of ATP.

It is found in the cytoplasm. The enzyme catalyses ATP-dependent cleavage of peptide bonds with broad specificity.. With respect to regulation, allosterically activated by HslU binding. Its function is as follows. Protease subunit of a proteasome-like degradation complex believed to be a general protein degrading machinery. The chain is ATP-dependent protease subunit HslV from Hydrogenovibrio crunogenus (strain DSM 25203 / XCL-2) (Thiomicrospira crunogena).